The primary structure comprises 1331 residues: Alpha,alpha-trehalose-phosphate synthase [UDP-forming] 1 (1331 aa).

Polar residues predominate over residues 1-13 (MTDTATGVHSNAN). Disordered stretches follow at residues 1–50 (MTDT…DNDP), 71–118 (TGKE…SGQL), and 1312–1331 (PMDQEESSTLGASLGTSFGN). A compositionally biased stretch (basic and acidic residues) spans 39–50 (DPFDRPKNDNDP). Acidic residues predominate over residues 77 to 98 (LDESDDMTENEDHDEMANEDDG). The segment covering 102–112 (NEKKVETRKMD) has biased composition (basic and acidic residues). The segment covering 1318-1331 (SSTLGASLGTSFGN) has biased composition (polar residues).

This sequence in the N-terminal section; belongs to the glycosyltransferase 20 family. It in the C-terminal section; belongs to the gob-1 trehalose phosphatase family.

The catalysed reaction is D-glucose 6-phosphate + UDP-alpha-D-glucose = alpha,alpha-trehalose 6-phosphate + UDP + H(+). Its function is as follows. Catalyzes the production of trehalose from glucose-6-phosphate and UDP-alpha-D-glucose in a 2 step process. In Caenorhabditis elegans, this protein is Alpha,alpha-trehalose-phosphate synthase [UDP-forming] 1 (tps-1).